The following is a 112-amino-acid chain: Urease subunit beta (112 aa).

The protein belongs to the urease beta subunit family. Heterotrimer of UreA (gamma), UreB (beta) and UreC (alpha) subunits. Three heterotrimers associate to form the active enzyme.

It is found in the cytoplasm. It carries out the reaction urea + 2 H2O + H(+) = hydrogencarbonate + 2 NH4(+). It functions in the pathway nitrogen metabolism; urea degradation; CO(2) and NH(3) from urea (urease route): step 1/1. The protein is Urease subunit beta of Thioalkalivibrio sulfidiphilus (strain HL-EbGR7).